The following is a 225-amino-acid chain: MSARVGVITFPGTLDDVDAARAVTLAGGEAVSLWHGDADLKGVDAVIVPGGFSYGDYLRCGAIARFAPVMGKVVQAAQGGMPVLGICNGFQVLCEAGLLPGALTRNEGLHFICRDEWLKVEATSTAWTSRYESGAEILVPLKSGEGRYQASENVLDELEGEGRVVFRYVGDNPNGSQRGIAGISSANGRVVGLMPHPEHATEALTGPSDDGLGMFYSVLDSVISA.

The 222-residue stretch at 4-225 folds into the Glutamine amidotransferase type-1 domain; the sequence is RVGVITFPGT…YSVLDSVISA (222 aa). The active-site Nucleophile is the Cys-87. Residues His-196 and Glu-198 contribute to the active site.

Part of the FGAM synthase complex composed of 1 PurL, 1 PurQ and 2 PurS subunits.

It is found in the cytoplasm. The enzyme catalyses N(2)-formyl-N(1)-(5-phospho-beta-D-ribosyl)glycinamide + L-glutamine + ATP + H2O = 2-formamido-N(1)-(5-O-phospho-beta-D-ribosyl)acetamidine + L-glutamate + ADP + phosphate + H(+). The catalysed reaction is L-glutamine + H2O = L-glutamate + NH4(+). It functions in the pathway purine metabolism; IMP biosynthesis via de novo pathway; 5-amino-1-(5-phospho-D-ribosyl)imidazole from N(2)-formyl-N(1)-(5-phospho-D-ribosyl)glycinamide: step 1/2. Its function is as follows. Part of the phosphoribosylformylglycinamidine synthase complex involved in the purines biosynthetic pathway. Catalyzes the ATP-dependent conversion of formylglycinamide ribonucleotide (FGAR) and glutamine to yield formylglycinamidine ribonucleotide (FGAM) and glutamate. The FGAM synthase complex is composed of three subunits. PurQ produces an ammonia molecule by converting glutamine to glutamate. PurL transfers the ammonia molecule to FGAR to form FGAM in an ATP-dependent manner. PurS interacts with PurQ and PurL and is thought to assist in the transfer of the ammonia molecule from PurQ to PurL. This Rhodococcus jostii (strain RHA1) protein is Phosphoribosylformylglycinamidine synthase subunit PurQ.